The primary structure comprises 118 residues: Aspartate 1-decarboxylase (118 aa).

Residue Ser-25 is the Schiff-base intermediate with substrate; via pyruvic acid of the active site. Position 25 is a pyruvic acid (Ser) (Ser-25). Thr-57 provides a ligand contact to substrate. Catalysis depends on Tyr-58, which acts as the Proton donor. Residue 73–75 (GAA) coordinates substrate.

Belongs to the PanD family. In terms of assembly, heterooctamer of four alpha and four beta subunits. It depends on pyruvate as a cofactor. Post-translationally, is synthesized initially as an inactive proenzyme, which is activated by self-cleavage at a specific serine bond to produce a beta-subunit with a hydroxyl group at its C-terminus and an alpha-subunit with a pyruvoyl group at its N-terminus.

It is found in the cytoplasm. It carries out the reaction L-aspartate + H(+) = beta-alanine + CO2. Its pathway is cofactor biosynthesis; (R)-pantothenate biosynthesis; beta-alanine from L-aspartate: step 1/1. In terms of biological role, catalyzes the pyruvoyl-dependent decarboxylation of aspartate to produce beta-alanine. This Leptospira biflexa serovar Patoc (strain Patoc 1 / Ames) protein is Aspartate 1-decarboxylase.